Reading from the N-terminus, the 432-residue chain is 3-oxo-tetronate kinase (432 aa).

ATP is bound by residues His-155, Ser-272, Ala-324, Gly-344, Glu-348, 370 to 373 (GGET), and Gly-414.

Belongs to the four-carbon acid sugar kinase family.

It catalyses the reaction 3-dehydro-L-erythronate + ATP = 3-dehydro-4-O-phospho-L-erythronate + ADP + H(+). It carries out the reaction 3-dehydro-D-erythronate + ATP = 3-dehydro-4-O-phospho-D-erythronate + ADP + H(+). In terms of biological role, catalyzes the ATP-dependent phosphorylation of 3-oxo-tetronate to 3-oxo-tetronate 4-phosphate. This Cupriavidus necator (strain ATCC 17699 / DSM 428 / KCTC 22496 / NCIMB 10442 / H16 / Stanier 337) (Ralstonia eutropha) protein is 3-oxo-tetronate kinase.